The sequence spans 124 residues: Small ribosomal subunit protein bS6 (124 aa).

Positions 96-124 (ETAPSPMMKEVQREEARKAAQTTTEGQAA) are disordered. The span at 115–124 (AQTTTEGQAA) shows a compositional bias: polar residues.

Belongs to the bacterial ribosomal protein bS6 family.

Its function is as follows. Binds together with bS18 to 16S ribosomal RNA. This chain is Small ribosomal subunit protein bS6, found in Cupriavidus necator (strain ATCC 17699 / DSM 428 / KCTC 22496 / NCIMB 10442 / H16 / Stanier 337) (Ralstonia eutropha).